A 386-amino-acid polypeptide reads, in one-letter code: 2-isopropylmalate synthase (386 aa).

A Pyruvate carboxyltransferase domain is found at 15 to 269 (IRIFDTTLRD…ETNVKTWKLY (255 aa)). The a divalent metal cation site is built by D24, H207, H209, and N243.

Belongs to the alpha-IPM synthase/homocitrate synthase family. In terms of assembly, homodimer. Requires a divalent metal cation as cofactor.

It catalyses the reaction 3-methyl-2-oxobutanoate + acetyl-CoA + H2O = (2S)-2-isopropylmalate + CoA + H(+). It functions in the pathway amino-acid biosynthesis; L-leucine biosynthesis; L-leucine from 3-methyl-2-oxobutanoate: step 1/4. Catalyzes the condensation of the acetyl group of acetyl-CoA with 3-methyl-2-oxobutanoate (2-oxoisovalerate) to form 3-carboxy-3-hydroxy-4-methylpentanoate (2-isopropylmalate). Carries out the first step of the leucine biosynthesis pathway. The protein is 2-isopropylmalate synthase (leuA) of Saccharolobus solfataricus (strain ATCC 35092 / DSM 1617 / JCM 11322 / P2) (Sulfolobus solfataricus).